We begin with the raw amino-acid sequence, 31 residues long: Cytochrome b6-f complex subunit 6 (31 aa).

Residues Ile-4–Ser-26 form a helical membrane-spanning segment.

Belongs to the PetL family. The 4 large subunits of the cytochrome b6-f complex are cytochrome b6, subunit IV (17 kDa polypeptide, PetD), cytochrome f and the Rieske protein, while the 4 small subunits are PetG, PetL, PetM and PetN. The complex functions as a dimer.

It localises to the plastid. The protein localises to the chloroplast thylakoid membrane. Its function is as follows. Component of the cytochrome b6-f complex, which mediates electron transfer between photosystem II (PSII) and photosystem I (PSI), cyclic electron flow around PSI, and state transitions. PetL is important for photoautotrophic growth as well as for electron transfer efficiency and stability of the cytochrome b6-f complex. The polypeptide is Cytochrome b6-f complex subunit 6 (Chloranthus spicatus (Chulantree)).